The following is a 96-amino-acid chain: Salivary protein FS50 (96 aa).

The first 19 residues, 1–19 (MKWILVLALVCLAVEYSYS), serve as a signal peptide directing secretion. Disulfide bonds link Cys-26–Cys-71, Cys-50–Cys-78, Cys-63–Cys-91, and Cys-67–Cys-93.

Its subcellular location is the secreted. Functionally, salivary protein that inhibits host voltage-gated sodium channel Nav1.5/SCN5A. The protein is Salivary protein FS50 of Xenopsylla cheopis (Oriental rat flea).